The following is a 597-amino-acid chain: Spastin (597 aa).

Topologically, residues Met1 to Phe20 are cytoplasmic. The helical intramembrane region spans Leu21–Trp37. Residues Ser38–Ala597 lie on the Cytoplasmic side of the membrane. The disordered stretch occupies residues Arg56–Gly80. The MIT domain occupies His91–Leu168. The disordered stretch occupies residues Ser193–Val289. Over residues Ser214–Arg231 the composition is skewed to polar residues. The span at Ser232–Ser252 shows a compositional bias: low complexity.

Belongs to the AAA ATPase family. Spastin subfamily. As to quaternary structure, homohexamer. The homohexamer is stabilized by ATP-binding. The homohexamer may adopt a ring conformation through which microtubules pass prior to being severed. Interacts with microtubules.

The protein resides in the membrane. It localises to the cytoplasm. It is found in the cytoskeleton. Its subcellular location is the microtubule organizing center. The protein localises to the centrosome. It carries out the reaction n ATP + n H2O + a microtubule = n ADP + n phosphate + (n+1) alpha/beta tubulin heterodimers.. In terms of biological role, ATP-dependent microtubule severing protein. Microtubule severing may promote reorganization of cellular microtubule arrays and the release of microtubules from the microtubule organizing center following nucleation. In Nematostella vectensis (Starlet sea anemone), this protein is Spastin.